Reading from the N-terminus, the 173-residue chain is Large ribosomal subunit protein bL9 (173 aa).

The tract at residues 151–173 is disordered; the sequence is YDDTPDRTETEESTKELQEEHAE.

It belongs to the bacterial ribosomal protein bL9 family.

In terms of biological role, binds to the 23S rRNA. The protein is Large ribosomal subunit protein bL9 of Lawsonia intracellularis (strain PHE/MN1-00).